Here is a 243-residue protein sequence, read N- to C-terminus: Orotidine 5'-phosphate decarboxylase (243 aa).

Residues Asp-19, Lys-41, 69-78 (DLKFFDIPAT), Thr-124, Arg-185, Gln-194, Gly-214, and Arg-215 contribute to the substrate site. The Proton donor role is filled by Lys-71.

Belongs to the OMP decarboxylase family. Type 1 subfamily. Homodimer.

It carries out the reaction orotidine 5'-phosphate + H(+) = UMP + CO2. The protein operates within pyrimidine metabolism; UMP biosynthesis via de novo pathway; UMP from orotate: step 2/2. In terms of biological role, catalyzes the decarboxylation of orotidine 5'-monophosphate (OMP) to uridine 5'-monophosphate (UMP). In Xanthomonas campestris pv. campestris (strain 8004), this protein is Orotidine 5'-phosphate decarboxylase.